Consider the following 348-residue polypeptide: Nitrogenase vanadium-iron protein beta chain (348 aa).

Cys31, Cys56, Cys115, and Ser153 together coordinate [8Fe-7S] cluster.

It belongs to the NifD/NifK/NifE/NifN family. As to quaternary structure, hexamer of two alpha, two beta, and two delta chains. Requires [8Fe-7S] cluster as cofactor.

It catalyses the reaction N2 + 8 reduced [2Fe-2S]-[ferredoxin] + 16 ATP + 16 H2O = H2 + 8 oxidized [2Fe-2S]-[ferredoxin] + 2 NH4(+) + 16 ADP + 16 phosphate + 6 H(+). In terms of biological role, this vanadium-iron protein is part of the nitrogenase complex that catalyzes the key enzymatic reactions in nitrogen fixation. This is Nitrogenase vanadium-iron protein beta chain (vnfK) from Azotobacter salinestris.